The primary structure comprises 182 residues: Pyruvoyl-dependent arginine decarboxylase (182 aa).

S44 carries the post-translational modification Pyruvic acid (Ser).

It belongs to the PdaD family. Requires pyruvate as cofactor.

It carries out the reaction L-arginine + H(+) = agmatine + CO2. The chain is Pyruvoyl-dependent arginine decarboxylase from Picrophilus torridus (strain ATCC 700027 / DSM 9790 / JCM 10055 / NBRC 100828 / KAW 2/3).